Here is a 1027-residue protein sequence, read N- to C-terminus: LLGL scribble cell polarity complex component 2 (1027 aa).

WD repeat units follow at residues 36–69 (SALG…FMGL), 76–117 (VLQI…EESF), 132–169 (VTEI…DRTI), 193–227 (ALQE…LSHF), 233–268 (LENA…NPEP), 282–324 (AITK…GQQT), 332–366 (VIDF…VIDL), 388–464 (TCSH…YKLS), 508–583 (QKIF…FVLV), and 592–653 (TSLA…LRQS). At S653 the chain carries Phosphoserine. The segment covering 654–669 (FRRMRRSRVSSHKRRP) has biased composition (basic residues). Residues 654-678 (FRRMRRSRVSSHKRRPGGPTGEAQA) are disordered. WD repeat units lie at residues 715–771 (VRTL…KEIQ), 780–832 (GILV…VSAK), 837–890 (LTAL…VRYS), and 904–927 (VFTK…SLST). The segment at 940-981 (TKAKKHNRPSNGNGTGLKMTSSGHVRNSKSQSDGDEKKPGPV) is disordered. Over residues 957-970 (KMTSSGHVRNSKSQ) the composition is skewed to polar residues. Phosphoserine is present on residues S971 and S1022.

This sequence belongs to the WD repeat L(2)GL family. In terms of assembly, interacts with GPSM2/LGN, PRKCI/aPKC and PARD6B/Par-6. The complex is enhanced during mitosis. Interacts with DCAF1. Post-translationally, phosphorylated at Ser-653 by PRKCI. Phosphorylation is enhanced during cell polarization induced by calcium. Phosphorylation may occur during the cell-cell contact-induced cell polarization and may contribute to the segregation of LLGL2 from the PRKCI/aPKC and PARD6B/Par-6 complex.

It is found in the cytoplasm. Part of a complex with GPSM2/LGN, PRKCI/aPKC and PARD6B/Par-6, which may ensure the correct organization and orientation of bipolar spindles for normal cell division. This complex plays roles in the initial phase of the establishment of epithelial cell polarity. The protein is LLGL scribble cell polarity complex component 2 (Llgl2) of Mus musculus (Mouse).